A 60-amino-acid polypeptide reads, in one-letter code: Temporin-MT5 (60 aa).

Residues 1–22 form the signal peptide; it reads MFTLKKPLLLLFFLATINLSLC. The propeptide at 23–44 is removed in mature form; it reads EQERNAEEERRDEPDERNAEVE. Phe-58 is subject to Phenylalanine amide.

The protein belongs to the frog skin active peptide (FSAP) family. Temporin subfamily. Expressed by the skin glands.

Its subcellular location is the secreted. Its function is as follows. Antimicrobial peptide. The polypeptide is Temporin-MT5 (Amolops mantzorum (Sichuan torrent frog)).